A 212-amino-acid polypeptide reads, in one-letter code: 3-isopropylmalate dehydratase small subunit (212 aa).

It belongs to the LeuD family. LeuD type 1 subfamily. Heterodimer of LeuC and LeuD.

It carries out the reaction (2R,3S)-3-isopropylmalate = (2S)-2-isopropylmalate. Its pathway is amino-acid biosynthesis; L-leucine biosynthesis; L-leucine from 3-methyl-2-oxobutanoate: step 2/4. Catalyzes the isomerization between 2-isopropylmalate and 3-isopropylmalate, via the formation of 2-isopropylmaleate. In Beutenbergia cavernae (strain ATCC BAA-8 / DSM 12333 / CCUG 43141 / JCM 11478 / NBRC 16432 / NCIMB 13614 / HKI 0122), this protein is 3-isopropylmalate dehydratase small subunit.